A 649-amino-acid polypeptide reads, in one-letter code: Glycerol-3-phosphate dehydrogenase, mitochondrial (649 aa).

69 to 97 provides a ligand contact to FAD; sequence DVLIIGGGATGTGVAVDASTRGLNVCLLE.

The protein belongs to the FAD-dependent glycerol-3-phosphate dehydrogenase family. FAD is required as a cofactor.

The protein resides in the mitochondrion. It catalyses the reaction a quinone + sn-glycerol 3-phosphate = dihydroxyacetone phosphate + a quinol. It functions in the pathway polyol metabolism; glycerol degradation via glycerol kinase pathway; glycerone phosphate from sn-glycerol 3-phosphate (anaerobic route): step 1/1. This Schizosaccharomyces pombe (strain 972 / ATCC 24843) (Fission yeast) protein is Glycerol-3-phosphate dehydrogenase, mitochondrial (gut2).